We begin with the raw amino-acid sequence, 495 residues long: Autoinducer 2 import ATP-binding protein LsrA (495 aa).

2 ABC transporter domains span residues 5-233 (IEAH…TPVS) and 256-494 (AQDF…FGGQ). 37–44 (GGNGAGKS) contacts ATP.

Belongs to the ABC transporter superfamily. AI-2 autoinducer porter (TC 3.A.1.2.8) family. As to quaternary structure, the complex is composed of two ATP-binding proteins (LsrA), two transmembrane proteins (LsrC and LsrD) and a solute-binding protein (LsrB).

Its subcellular location is the cell inner membrane. It catalyses the reaction ATP + H2O + (2R,4S)-2-methyl-2,3,3,4-tetrahydroxytetrahydrofuran-[AI-2-binding protein]Side 1 = ADP + phosphate + (2R,4S)-2-methyl-2,3,3,4-tetrahydroxytetrahydrofuranSide 2 + [AI-2-binding protein]Side 1.. Part of the ABC transporter complex LsrABCD involved in autoinducer 2 (AI-2) import. Responsible for energy coupling to the transport system. The protein is Autoinducer 2 import ATP-binding protein LsrA (lsrA) of Enterobacter sp. (strain 638).